Here is a 456-residue protein sequence, read N- to C-terminus: MRKIKEISADTMTPISVYLRLKGKNKVILESIPRENDQSRFSIIALNPVKHIKFTDGILSVNDEIISDENPMEFLEKLVCQPESTDENLDLPFTSGAIGYAGFDTYGIFEGIQPELKDSIGTPDMYFMLYESALIFDHKREKLIFIEDNTYSQRSEKELQNALSANIESLSLLTEAENELTELSKLNFVSNMSQELFEEKVAKAKELIRNGDMFQVVLSQRLTADFTDNPFNYYRKLRVENPSSYMYFMEFDNFHVIGSSPERLVAVHGNQVSTNPIAGTRKRGQTEFEDQALIEDLESDPKEVAEHKMLVDLGRNDIGKISKYGSIEVPVFMKVEKYRYVMHITSEVTGELRPEFTAMDALRATLPAGTLSGAPKHRAYQRIYEFETQKRGIYGGAIGYLTKNGNCDFAIAIRTMVLKDKKAHVQAGAGIVYDSVPEHEYQETLNKAQGLLKVGQ.

Residues Ser31 and 244–246 contribute to the L-tryptophan site; that span reads SYM. 279–280 is a binding site for chorismate; it reads GT. Glu306 contacts Mg(2+). Chorismate is bound by residues Tyr394, Arg414, 428 to 430, and Gly430; that span reads GAG. Mg(2+) is bound at residue Glu443.

This sequence belongs to the anthranilate synthase component I family. In terms of assembly, heterotetramer consisting of two non-identical subunits: a beta subunit (TrpG) and a large alpha subunit (TrpE). The cofactor is Mg(2+).

The catalysed reaction is chorismate + L-glutamine = anthranilate + pyruvate + L-glutamate + H(+). Its pathway is amino-acid biosynthesis; L-tryptophan biosynthesis; L-tryptophan from chorismate: step 1/5. Feedback inhibited by tryptophan. Its function is as follows. Part of a heterotetrameric complex that catalyzes the two-step biosynthesis of anthranilate, an intermediate in the biosynthesis of L-tryptophan. In the first step, the glutamine-binding beta subunit (TrpG) of anthranilate synthase (AS) provides the glutamine amidotransferase activity which generates ammonia as a substrate that, along with chorismate, is used in the second step, catalyzed by the large alpha subunit of AS (TrpE) to produce anthranilate. In the absence of TrpG, TrpE can synthesize anthranilate directly from chorismate and high concentrations of ammonia. This is Anthranilate synthase component 1 (trpE) from Lactococcus lactis subsp. lactis (strain IL1403) (Streptococcus lactis).